The following is a 288-amino-acid chain: Diaminopimelate epimerase (288 aa).

Positions 13, 46, and 66 each coordinate substrate. Residue cysteine 75 is the Proton donor of the active site. Substrate is bound by residues 76-77, asparagine 166, asparagine 199, and 217-218; these read GN and ER. Residue cysteine 226 is the Proton acceptor of the active site. A substrate-binding site is contributed by 227-228; sequence GT.

It belongs to the diaminopimelate epimerase family. Homodimer.

Its subcellular location is the cytoplasm. It carries out the reaction (2S,6S)-2,6-diaminopimelate = meso-2,6-diaminopimelate. Its pathway is amino-acid biosynthesis; L-lysine biosynthesis via DAP pathway; DL-2,6-diaminopimelate from LL-2,6-diaminopimelate: step 1/1. In terms of biological role, catalyzes the stereoinversion of LL-2,6-diaminopimelate (L,L-DAP) to meso-diaminopimelate (meso-DAP), a precursor of L-lysine and an essential component of the bacterial peptidoglycan. The chain is Diaminopimelate epimerase from Cupriavidus pinatubonensis (strain JMP 134 / LMG 1197) (Cupriavidus necator (strain JMP 134)).